The chain runs to 473 residues: Putative BTB/POZ domain-containing protein R765 (473 aa).

In terms of domain architecture, BTB spans 2–72 (TNIQLVIKDD…KIYDREITAD (71 aa)).

Belongs to the mimivirus BTB/WD family.

The sequence is that of Putative BTB/POZ domain-containing protein R765 from Acanthamoeba polyphaga mimivirus (APMV).